Reading from the N-terminus, the 137-residue chain is MERTFAIIKPDAVERNISGKVLDRIEGAGFKIVGMKKIHLTKKEAEGFYYVHKERPFFNDLCTFMSRNPVIVLALEKDNAIAAWRELMGATNPANADAGTIRKDLGVSIEENTVHGSDSPESAAFEIPYFFSSLELV.

Residues Lys9, Phe57, Arg85, Thr91, Arg102, and Asn112 each coordinate ATP. The active-site Pros-phosphohistidine intermediate is His115.

Belongs to the NDK family. Homotetramer. The cofactor is Mg(2+).

Its subcellular location is the cytoplasm. It catalyses the reaction a 2'-deoxyribonucleoside 5'-diphosphate + ATP = a 2'-deoxyribonucleoside 5'-triphosphate + ADP. The catalysed reaction is a ribonucleoside 5'-diphosphate + ATP = a ribonucleoside 5'-triphosphate + ADP. In terms of biological role, major role in the synthesis of nucleoside triphosphates other than ATP. The ATP gamma phosphate is transferred to the NDP beta phosphate via a ping-pong mechanism, using a phosphorylated active-site intermediate. The chain is Nucleoside diphosphate kinase from Geotalea daltonii (strain DSM 22248 / JCM 15807 / FRC-32) (Geobacter daltonii).